The chain runs to 202 residues: Ribosomal RNA small subunit methyltransferase G (202 aa).

Residues Gly-75, Phe-80, 125–126 (VQ), and Arg-139 contribute to the S-adenosyl-L-methionine site.

This sequence belongs to the methyltransferase superfamily. RNA methyltransferase RsmG family.

The protein localises to the cytoplasm. In terms of biological role, specifically methylates the N7 position of a guanine in 16S rRNA. The protein is Ribosomal RNA small subunit methyltransferase G of Mesomycoplasma hyopneumoniae (strain 232) (Mycoplasma hyopneumoniae).